Here is a 213-residue protein sequence, read N- to C-terminus: 2-C-methyl-D-erythritol 4-phosphate cytidylyltransferase (213 aa).

Belongs to the IspD/TarI cytidylyltransferase family. IspD subfamily.

It carries out the reaction 2-C-methyl-D-erythritol 4-phosphate + CTP + H(+) = 4-CDP-2-C-methyl-D-erythritol + diphosphate. The protein operates within isoprenoid biosynthesis; isopentenyl diphosphate biosynthesis via DXP pathway; isopentenyl diphosphate from 1-deoxy-D-xylulose 5-phosphate: step 2/6. Catalyzes the formation of 4-diphosphocytidyl-2-C-methyl-D-erythritol from CTP and 2-C-methyl-D-erythritol 4-phosphate (MEP). This Thermus thermophilus (strain ATCC BAA-163 / DSM 7039 / HB27) protein is 2-C-methyl-D-erythritol 4-phosphate cytidylyltransferase.